A 348-amino-acid chain; its full sequence is DNA-directed RNA polymerase subunit alpha (348 aa).

The interval 1–243 (MLIKQGDRLI…DQISVFINFD (243 aa)) is alpha N-terminal domain (alpha-NTD). Residues 260 to 348 (VNENLFKGID…WLKRKQQNEA (89 aa)) form an alpha C-terminal domain (alpha-CTD) region.

This sequence belongs to the RNA polymerase alpha chain family. Homodimer. The RNAP catalytic core consists of 2 alpha, 1 beta, 1 beta' and 1 omega subunit. When a sigma factor is associated with the core the holoenzyme is formed, which can initiate transcription.

The catalysed reaction is RNA(n) + a ribonucleoside 5'-triphosphate = RNA(n+1) + diphosphate. In terms of biological role, DNA-dependent RNA polymerase catalyzes the transcription of DNA into RNA using the four ribonucleoside triphosphates as substrates. The chain is DNA-directed RNA polymerase subunit alpha from Oleidesulfovibrio alaskensis (strain ATCC BAA-1058 / DSM 17464 / G20) (Desulfovibrio alaskensis).